The sequence spans 28 residues: Phospholipase A2 2 (28 aa).

It belongs to the phospholipase A2 family. Group I subfamily. The cofactor is Ca(2+). Expressed by the venom gland.

Its subcellular location is the secreted. It carries out the reaction a 1,2-diacyl-sn-glycero-3-phosphocholine + H2O = a 1-acyl-sn-glycero-3-phosphocholine + a fatty acid + H(+). Its function is as follows. Snake venom phospholipase A2 (PLA2) that inhibits neuromuscular transmission by blocking acetylcholine release from the nerve termini. PLA2 catalyzes the calcium-dependent hydrolysis of the 2-acyl groups in 3-sn-phosphoglycerides. This Micrurus nigrocinctus (Central American coral snake) protein is Phospholipase A2 2.